The following is a 271-amino-acid chain: Mitochondrial distribution and morphology protein 12 (271 aa).

An SMP-LTD domain is found at 1-267; sequence MSFDINWSTL…WPSWINLDFN (267 aa). Residue Lys-49 forms a Glycyl lysine isopeptide (Lys-Gly) (interchain with G-Cter in ubiquitin) linkage.

Belongs to the MDM12 family. In terms of assembly, component of the ER-mitochondria encounter structure (ERMES) or MDM complex, composed of MMM1, MDM10, MDM12 and MDM34. An MMM1 homodimer associates with one molecule of MDM12 on each side in a pairwise head-to-tail manner, and the SMP-LTD domains of MMM1 and MDM12 generate a continuous hydrophobic tunnel for phospholipid trafficking. Interacts with PUF3.

It localises to the mitochondrion outer membrane. It is found in the endoplasmic reticulum membrane. Its function is as follows. Component of the ERMES/MDM complex, which serves as a molecular tether to connect the endoplasmic reticulum (ER) and mitochondria. Components of this complex are involved in the control of mitochondrial shape and protein biogenesis, and function in nonvesicular lipid trafficking between the ER and mitochondria. MDM12 is required for the interaction of the ER-resident membrane protein MMM1 and the outer mitochondrial membrane-resident beta-barrel protein MDM10. The MDM12-MMM1 subcomplex functions in the major beta-barrel assembly pathway that is responsible for biogenesis of all mitochondrial outer membrane beta-barrel proteins, and acts in a late step after the SAM complex. The MDM10-MDM12-MMM1 subcomplex further acts in the TOM40-specific pathway after the action of the MDM12-MMM1 complex. Essential for establishing and maintaining the structure of mitochondria and maintenance of mtDNA nucleoids. This chain is Mitochondrial distribution and morphology protein 12, found in Saccharomyces cerevisiae (strain AWRI1631) (Baker's yeast).